The chain runs to 171 residues: Shikimate kinase (171 aa).

14-19 (GAGKST) provides a ligand contact to ATP. Mg(2+) is bound at residue S18. 3 residues coordinate substrate: D36, R60, and G82. R120 lines the ATP pocket. Substrate is bound at residue R139. ATP is bound at residue Q156.

This sequence belongs to the shikimate kinase family. In terms of assembly, monomer. Requires Mg(2+) as cofactor.

The protein resides in the cytoplasm. The enzyme catalyses shikimate + ATP = 3-phosphoshikimate + ADP + H(+). The protein operates within metabolic intermediate biosynthesis; chorismate biosynthesis; chorismate from D-erythrose 4-phosphate and phosphoenolpyruvate: step 5/7. Catalyzes the specific phosphorylation of the 3-hydroxyl group of shikimic acid using ATP as a cosubstrate. In Shewanella putrefaciens (strain CN-32 / ATCC BAA-453), this protein is Shikimate kinase.